Consider the following 465-residue polypeptide: Ribulose bisphosphate carboxylase large chain (465 aa).

N6,N6,N6-trimethyllysine is present on Lys-4. Substrate-binding residues include Asn-113 and Thr-163. The active-site Proton acceptor is Lys-165. Residue Lys-167 coordinates substrate. 3 residues coordinate Mg(2+): Lys-191, Asp-193, and Glu-194. N6-carboxylysine is present on Lys-191. His-284 serves as the catalytic Proton acceptor. 3 residues coordinate substrate: Arg-285, His-317, and Ser-369.

Belongs to the RuBisCO large chain family. Type I subfamily. Heterohexadecamer of 8 large chains and 8 small chains; disulfide-linked. The disulfide link is formed within the large subunit homodimers. The cofactor is Mg(2+). The disulfide bond which can form in the large chain dimeric partners within the hexadecamer appears to be associated with oxidative stress and protein turnover.

The protein resides in the plastid. It localises to the chloroplast. The enzyme catalyses 2 (2R)-3-phosphoglycerate + 2 H(+) = D-ribulose 1,5-bisphosphate + CO2 + H2O. The catalysed reaction is D-ribulose 1,5-bisphosphate + O2 = 2-phosphoglycolate + (2R)-3-phosphoglycerate + 2 H(+). Its function is as follows. RuBisCO catalyzes two reactions: the carboxylation of D-ribulose 1,5-bisphosphate, the primary event in carbon dioxide fixation, as well as the oxidative fragmentation of the pentose substrate in the photorespiration process. Both reactions occur simultaneously and in competition at the same active site. The sequence is that of Ribulose bisphosphate carboxylase large chain from Clitoria ternatea (Butterfly pea).